Here is a 126-residue protein sequence, read N- to C-terminus: ADMGMTLAGGAYNFGFNTGDATGHSRVESGTAGSAVGSYSYIDANGDRRTVQYSAGPDGFKATGDVGVDRKTAAAAAAMAALAPKAPPAPAPAAPVAPVVPGAWGYWGAPGYSVILPGLAGYAARW.

The 79-residue stretch at 9 to 87 folds into the Chitin-binding type R&amp;R domain; the sequence is GGAYNFGFNT…AMAALAPKAP (79 aa).

In terms of biological role, component of the rigid cuticle of the spider. The chain is Adult-specific rigid cuticular protein 12.4 from Araneus diadematus (European garden spider).